The chain runs to 532 residues: MVKRVAIVGAGVSGLASIKCCLEEGLEPTCFERSCDLGGLWRFTEHVEEGRASLYNSVVSNSSKEMSCYSDFPFPEDYPNFVPNSLFLEYLQLYATQFNLLRCIYFNTKVCSITKRPDFAVSGQWEVVTVCQGKQSSDTFDAVMVCTGFLTNPHLPLDSFPGIQTFKGQYFHSRQYKHPDVFKDKRVLVVGMGNSGTDIAVEASHLAKKVFLSTTGGAWVISRVFDSGYPWDMIFMTRFQNMLRNLLPTPVVSWLISKKMNSWFNHVNYGVAPEDRTQLREPVLNDELPGRIITGKVLIKPSIKEVKENSVVFNNTPKEEPIDVIVFATGYSFAFPFLDESIVKVEDGQASLYKYIFPAHLPKPTLAVIGLIKPLGSMIPTGETQARWVVQVLKGATTLPPPSVMMKEVNERKKNKHSGFGLCYCKALQSDYITYIDDLLTSINAKPDLRAMLLTDPRLALSIFFGPCTPYHFRLTGPGKWEGARKAILTQWDRTVNVTKTRTVQETPSTFETLLKLFSFLALLVAVFFIFL.

Residues 1–510 (MVKRVAIVGA…TRTVQETPST (510 aa)) lie on the Lumenal side of the membrane. FAD-binding positions include 9-13 (GAGVS), Glu32, 40-41 (LW), and 61-62 (NS). Residues 60 to 61 (SN) and 195 to 198 (SGTD) contribute to the NADP(+) site. Residues 511–531 (FETLLKLFSFLALLVAVFFIF) traverse the membrane as a helical segment. A topological domain (cytoplasmic) is located at residue Leu532.

The protein belongs to the FMO family. FAD is required as a cofactor. In terms of tissue distribution, expressed in liver, lung and kidney and to a lesser extent in the heart and brain.

It is found in the endoplasmic reticulum membrane. It catalyses the reaction hypotaurine + NADPH + O2 + H(+) = taurine + NADP(+) + H2O. The enzyme catalyses hypotaurine + NADH + O2 + H(+) = taurine + NAD(+) + H2O. It carries out the reaction trimethylamine + NADPH + O2 = trimethylamine N-oxide + NADP(+) + H2O. The catalysed reaction is N,N-dimethylaniline + NADPH + O2 + H(+) = N,N-dimethylaniline N-oxide + NADP(+) + H2O. Its function is as follows. Broad spectrum monooxygenase that catalyzes the oxygenation of a wide variety of nitrogen- and sulfur-containing compounds including xenobiotics. Catalyzes the S-oxygenation of hypotaurine to produce taurine, an organic osmolyte involved in cell volume regulation as well as a variety of cytoprotective and developmental processes. In vitro, catalyzes the N-oxygenation of trimethylamine (TMA) to produce trimethylamine N-oxide (TMAO) and could therefore participate to the detoxification of this compound that is generated by the action of gut microbiota from dietary precursors such as choline, choline containing compounds, betaine or L-carnitine. The sequence is that of Flavin-containing monooxygenase 1 from Rattus norvegicus (Rat).